The sequence spans 402 residues: Argininosuccinate synthase (402 aa).

Residue 7-15 participates in ATP binding; the sequence is LYSGGLDTS. Tyr-83 serves as a coordination point for L-citrulline. Gly-113 contacts ATP. L-aspartate contacts are provided by Thr-115, Asn-119, and Asp-120. Asn-119 is an L-citrulline binding site. L-citrulline-binding residues include Arg-123, Ser-169, Ser-178, Glu-253, and Tyr-265.

Belongs to the argininosuccinate synthase family. Type 1 subfamily. Homotetramer.

Its subcellular location is the cytoplasm. The catalysed reaction is L-citrulline + L-aspartate + ATP = 2-(N(omega)-L-arginino)succinate + AMP + diphosphate + H(+). It participates in amino-acid biosynthesis; L-arginine biosynthesis; L-arginine from L-ornithine and carbamoyl phosphate: step 2/3. The chain is Argininosuccinate synthase from Thermoplasma acidophilum (strain ATCC 25905 / DSM 1728 / JCM 9062 / NBRC 15155 / AMRC-C165).